Reading from the N-terminus, the 429-residue chain is Transcriptional coactivator AacuS (429 aa).

The 65-residue stretch at 80–144 (MASQTQLLAC…GFLQEPELGH (65 aa)) folds into the HTH iclR-type domain. Residues 110-129 (IKDVAELIGVPENHICRIVR) constitute a DNA-binding region (H-T-H motif).

The protein resides in the nucleus. Functionally, transcriptional coactivator; part of the gene cluster that mediates the biosynthesis of the tetrahydroxanthone dimer secalonic acid D. The polypeptide is Transcriptional coactivator AacuS (Aspergillus aculeatus (strain ATCC 16872 / CBS 172.66 / WB 5094)).